Consider the following 421-residue polypeptide: Testin (421 aa).

Residues 92-199 enclose the PET domain; it reads MILTNPVAAK…GDVKLPREMN (108 aa). The interval 133 to 164 is disordered; it reads EKQPVAGSEGAQYRKKQLAKQLPAHDQDPSKC. Residues 155 to 164 show a composition bias toward basic and acidic residues; that stretch reads PAHDQDPSKC. 3 consecutive LIM zinc-binding domains span residues 234–297, 299–359, and 362–421; these read YSCY…CDSE, PRCA…NHAV, and QGCH…KMMS.

The protein belongs to the prickle / espinas / testin family. Interacts via LIM domain 1 with ZYX. Interacts (via LIM domain 3) with ENAH and VASP. Interacts with ALKBH4, talin, actin, alpha-actinin, GRIP1 and PXN. Interacts (via LIM domain 2) with ACTL7A (via N-terminus). Heterodimer with ACTL7A; the heterodimer interacts with ENAH to form a heterotrimer.

It localises to the cytoplasm. Its subcellular location is the cell junction. The protein localises to the focal adhesion. Functionally, scaffold protein that may play a role in cell adhesion, cell spreading and in the reorganization of the actin cytoskeleton. Plays a role in the regulation of cell proliferation. May act as a tumor suppressor. This Sus scrofa (Pig) protein is Testin (TES).